Reading from the N-terminus, the 244-residue chain is tRNA pseudouridine synthase A (244 aa).

The active-site Nucleophile is Asp52. Tyr110 serves as a coordination point for substrate.

Belongs to the tRNA pseudouridine synthase TruA family. In terms of assembly, homodimer.

It catalyses the reaction uridine(38/39/40) in tRNA = pseudouridine(38/39/40) in tRNA. Formation of pseudouridine at positions 38, 39 and 40 in the anticodon stem and loop of transfer RNAs. This chain is tRNA pseudouridine synthase A, found in Geotalea daltonii (strain DSM 22248 / JCM 15807 / FRC-32) (Geobacter daltonii).